The sequence spans 406 residues: Acetamidase (406 aa).

Residues 387–399 show a composition bias toward low complexity; sequence CRPRSSTSTSPRR. Positions 387 to 406 are disordered; sequence CRPRSSTSTSPRRQGPAEGR.

Belongs to the acetamidase/formamidase family.

The catalysed reaction is a monocarboxylic acid amide + H2O = a monocarboxylate + NH4(+). The enzyme catalyses acetamide + H2O = acetate + NH4(+). Allows acetamide to be used as a sole carbon or nitrogen source. In Mycolicibacterium smegmatis (Mycobacterium smegmatis), this protein is Acetamidase (amdA).